The primary structure comprises 80 residues: Large ribosomal subunit protein eL20 (80 aa).

This sequence belongs to the eukaryotic ribosomal protein eL20 family. Part of the 50S ribosomal subunit. Binds 23S rRNA.

The sequence is that of Large ribosomal subunit protein eL20 from Methanopyrus kandleri (strain AV19 / DSM 6324 / JCM 9639 / NBRC 100938).